A 411-amino-acid chain; its full sequence is MDIFKHHESQVQSYANHFPVLFGTAKGSWLYSQQGDAYLDFLSGAGALNYGHNNAVLKQALLEYIERDGLTHGLDMHSEAKAHFIQALQTHILEPRGLNYKLQFTGPTGTNAVEAALKLARKVTGRHNVVTFTNGFHGCSLGALAATGNQHHRQGAGLALSGVYRVPYDGYAGVDGLTLFETMLQDNSSGLDKPAAVLLETVQGEGGLNVASDAWLQRVQAICRAQQILLIVDDIQAGCGRTGTFFSFEPSGIEPDMVTLSKSLSGYGLPMALVLFKPEWDQWKPGEHNGTFRGNNHAFVTATRALEAYWANQDFQTHIAARSEQVTQALLQCLSRYPTLFSGLKGRGLMQGLACHNGDIARDIAALCFQKGLIIETAGAEDEVLKVFCPLTITEADLAHGLTIIERVLLE.

N6-(pyridoxal phosphate)lysine is present on Lys262.

This sequence belongs to the class-III pyridoxal-phosphate-dependent aminotransferase family. Requires pyridoxal 5'-phosphate as cofactor.

The catalysed reaction is L-2,4-diaminobutanoate + 2-oxoglutarate = L-aspartate 4-semialdehyde + L-glutamate. It participates in amine and polyamine biosynthesis; ectoine biosynthesis; L-ectoine from L-aspartate 4-semialdehyde: step 1/3. Functionally, catalyzes reversively the conversion of L-aspartate beta-semialdehyde (ASA) to L-2,4-diaminobutyrate (DABA) by transamination with L-glutamate. In Vibrio cholerae serotype O1 (strain ATCC 39315 / El Tor Inaba N16961), this protein is Diaminobutyrate--2-oxoglutarate transaminase (ectB).